The following is a 793-amino-acid chain: PC3-like endoprotease variant A (793 aa).

The first 29 residues, methionine 1–threonine 29, serve as a signal peptide directing secretion. Residues valine 30 to arginine 152 constitute a propeptide that is removed on maturation. Residues asparagine 62 and asparagine 190 are each glycosylated (N-linked (GlcNAc...) asparagine). A Peptidase S8 domain is found at methionine 164 to valine 486. Residues aspartate 202 and histidine 242 each act as charge relay system in the active site. Disulfide bonds link cysteine 259–cysteine 411 and cysteine 351–cysteine 381. The active-site Charge relay system is the serine 419. In terms of domain architecture, P/Homo B spans leucine 495–lysine 638. A disulfide bridge links cysteine 501 with cysteine 527.

Belongs to the peptidase S8 family. Furin subfamily. In terms of tissue distribution, predominantly in the body column.

Functionally, probably involved in the processing of hormone and other protein precursors at sites comprised of pairs of basic amino acid residues. The polypeptide is PC3-like endoprotease variant A (Hydra vulgaris (Hydra)).